The chain runs to 185 residues: Ribosome-recycling factor (185 aa).

Belongs to the RRF family.

It is found in the cytoplasm. Responsible for the release of ribosomes from messenger RNA at the termination of protein biosynthesis. May increase the efficiency of translation by recycling ribosomes from one round of translation to another. The polypeptide is Ribosome-recycling factor (Thermobifida fusca (strain YX)).